A 478-amino-acid chain; its full sequence is 5-hydroxytryptamine receptor 3A (478 aa).

A signal peptide spans 1–23; the sequence is MLLWVQQALLALLLPTLLAQGEA. Over 24–241 the chain is Extracellular; sequence RRSRNTTRPA…MKFYVVIRRR (218 aa). 4 N-linked (GlcNAc...) asparagine glycosylation sites follow: Asn28, Asn104, Asn170, and Asn186. An intrachain disulfide couples Cys157 to Cys171. A helical transmembrane segment spans residues 242–268; it reads PLFYVVSLLLPSIFLMVMDIVGFYLPP. The Cytoplasmic segment spans residues 269-273; sequence NSGER. The helical transmembrane segment at 274–292 threads the bilayer; it reads VSFKITLLLGYSVFLIIVS. The Extracellular segment spans residues 293 to 302; that stretch reads DTLPATAIGT. Residues 303–321 form a helical membrane-spanning segment; sequence PLIGVYFVVCMALLVISLA. Residues 322–455 lie on the Cytoplasmic side of the membrane; it reads ETIFIVRLVH…GSVLDKLLFH (134 aa). A disordered region spans residues 389–408; that stretch reads GGPQDFEKSPRDRCSPPPPP. Residues 393–402 show a composition bias toward basic and acidic residues; that stretch reads DFEKSPRDRC. The tract at residues 414 to 450 is HA-stretch; determines single-channel conductance in 5-HT3 receptors; the sequence is AVCGLLQELSSIRQFLEKRDEIREVARDWLRVGSVLD. A helical membrane pass occupies residues 456 to 475; the sequence is IYLLAVLAYSITLVMLWSIW. At 476–478 the chain is on the extracellular side; that stretch reads QYA.

The protein belongs to the ligand-gated ion channel (TC 1.A.9) family. 5-hydroxytryptamine receptor (TC 1.A.9.2) subfamily. HTR3A sub-subfamily. Forms homopentameric as well as heteropentameric serotonin-activated cation-selective channel complexes with HTR3B or HTR3C or HTR3D or HTR3E. The homomeric complex is functional but exhibits low conductance with modified voltage dependence, and decreased agonist and antagonist affinity. Heteropentameric complexes display properties which resemble that of neuronal serotonin-activated channels in vivo. Interacts with RIC3. In terms of tissue distribution, expressed in cerebral cortex, amygdala, hippocampus, and testis. Detected in monocytes of the spleen and tonsil, in small and large intestine, uterus, prostate, ovary and placenta.

Its subcellular location is the postsynaptic cell membrane. The protein resides in the cell membrane. It carries out the reaction Na(+)(in) = Na(+)(out). The catalysed reaction is K(+)(in) = K(+)(out). The enzyme catalyses Ca(2+)(in) = Ca(2+)(out). It catalyses the reaction Mg(2+)(in) = Mg(2+)(out). Forms serotonin (5-hydroxytryptamine/5-HT3)-activated cation-selective channel complexes, which when activated cause fast, depolarizing responses in neurons. The protein is 5-hydroxytryptamine receptor 3A of Homo sapiens (Human).